The following is a 251-amino-acid chain: Triosephosphate isomerase (251 aa).

9–11 (NWK) serves as a coordination point for substrate. Histidine 95 (electrophile) is an active-site residue. The active-site Proton acceptor is the glutamate 167. Substrate is bound by residues glycine 173, serine 213, and 234 to 235 (GG). Serine 213 bears the Phosphoserine mark.

It belongs to the triosephosphate isomerase family. In terms of assembly, homodimer.

The protein resides in the cytoplasm. The enzyme catalyses D-glyceraldehyde 3-phosphate = dihydroxyacetone phosphate. It participates in carbohydrate biosynthesis; gluconeogenesis. It functions in the pathway carbohydrate degradation; glycolysis; D-glyceraldehyde 3-phosphate from glycerone phosphate: step 1/1. Functionally, involved in the gluconeogenesis. Catalyzes stereospecifically the conversion of dihydroxyacetone phosphate (DHAP) to D-glyceraldehyde-3-phosphate (G3P). The sequence is that of Triosephosphate isomerase from Anoxybacillus flavithermus (strain DSM 21510 / WK1).